A 114-amino-acid chain; its full sequence is Fluoride-specific ion channel FluC 1 (114 aa).

3 helical membrane-spanning segments follow: residues 23–43 (ATLT…SYVF), 52–72 (LSTA…TLSV), and 84–104 (FLAM…SHLG). The Na(+) site is built by G62 and T65.

This sequence belongs to the fluoride channel Fluc/FEX (TC 1.A.43) family.

It localises to the cell membrane. The catalysed reaction is fluoride(in) = fluoride(out). With respect to regulation, na(+) is not transported, but it plays an essential structural role and its presence is essential for fluoride channel function. Functionally, fluoride-specific ion channel. Important for reducing fluoride concentration in the cell, thus reducing its toxicity. The protein is Fluoride-specific ion channel FluC 1 of Desulfitobacterium hafniense (strain Y51).